A 341-amino-acid chain; its full sequence is Glucokinase (341 aa).

18 to 23 (GDIGGT) is an ATP binding site.

This sequence belongs to the bacterial glucokinase family.

The protein localises to the cytoplasm. It catalyses the reaction D-glucose + ATP = D-glucose 6-phosphate + ADP + H(+). The sequence is that of Glucokinase from Mesorhizobium japonicum (strain LMG 29417 / CECT 9101 / MAFF 303099) (Mesorhizobium loti (strain MAFF 303099)).